The chain runs to 322 residues: tRNA-dihydrouridine synthase B (322 aa).

Residues 16–18 (PMA) and Gln-70 contribute to the FMN site. Catalysis depends on Cys-100, which acts as the Proton donor. FMN is bound by residues Lys-139, 200 to 202 (NGD), and 224 to 225 (GR).

It belongs to the Dus family. DusB subfamily. It depends on FMN as a cofactor.

The enzyme catalyses a 5,6-dihydrouridine in tRNA + NAD(+) = a uridine in tRNA + NADH + H(+). The catalysed reaction is a 5,6-dihydrouridine in tRNA + NADP(+) = a uridine in tRNA + NADPH + H(+). Catalyzes the synthesis of 5,6-dihydrouridine (D), a modified base found in the D-loop of most tRNAs, via the reduction of the C5-C6 double bond in target uridines. The protein is tRNA-dihydrouridine synthase B of Vibrio vulnificus (strain CMCP6).